Here is a 306-residue protein sequence, read N- to C-terminus: Oxygen-dependent coproporphyrinogen-III oxidase (306 aa).

Ser94 provides a ligand contact to substrate. 2 residues coordinate a divalent metal cation: His98 and His108. The Proton donor role is filled by His108. 110–112 (NVR) is a substrate binding site. A divalent metal cation contacts are provided by His147 and His177. An important for dimerization region spans residues 242–277 (YVEFNLVYDRGTLFGLQTGGRTESILMSMPPLVRWQ). A substrate-binding site is contributed by 260-262 (GGR).

It belongs to the aerobic coproporphyrinogen-III oxidase family. Homodimer. Requires a divalent metal cation as cofactor.

The protein localises to the cytoplasm. The enzyme catalyses coproporphyrinogen III + O2 + 2 H(+) = protoporphyrinogen IX + 2 CO2 + 2 H2O. It functions in the pathway porphyrin-containing compound metabolism; protoporphyrin-IX biosynthesis; protoporphyrinogen-IX from coproporphyrinogen-III (O2 route): step 1/1. Its function is as follows. Involved in the heme biosynthesis. Catalyzes the aerobic oxidative decarboxylation of propionate groups of rings A and B of coproporphyrinogen-III to yield the vinyl groups in protoporphyrinogen-IX. This is Oxygen-dependent coproporphyrinogen-III oxidase from Shewanella sediminis (strain HAW-EB3).